The primary structure comprises 417 residues: MNKLYIEGDKKLNGNVIISGSKNAALPILFMTILTEKKIKISNVPKLRDINIAIQLLKSLGAQIKYKKKNLYIDTSSIKIHSPPYDLTKQIRASIWMLAPLLIRFGKAKIFLPGGCKIGARPIDLHIKGLIALGAKIILEKNYISASIKKPLTGKRIYIEKISVGATITVMSAATLAQGTTIIENAAQEPEIIDTAKFLNTLGANIIGAGSNRIFIKGVLTLIGGKHKIIPDRIETGTFLIAAAISKGYIICHDTEPKYLKNVLMKLSESGAEIKTGKDWIQLDMRGKKPKSINISTSPYPGFPTDMQPQFALLNSISQSKGTITENIFENRFIYTSELIKMGAKIKIKNNSIVCKGVPNLYSQNVFSNDLRGSATLVLAGCIARGTTTVDNIHHFERGYEAFSEKLNKLGANIKYI.

A phosphoenolpyruvate-binding site is contributed by 22-23 (KN). Arg-92 lines the UDP-N-acetyl-alpha-D-glucosamine pocket. Cys-116 (proton donor) is an active-site residue. A 2-(S-cysteinyl)pyruvic acid O-phosphothioketal modification is found at Cys-116. UDP-N-acetyl-alpha-D-glucosamine contacts are provided by residues 121 to 125 (RPIDL), Asp-306, and Ile-328.

Belongs to the EPSP synthase family. MurA subfamily.

It localises to the cytoplasm. It carries out the reaction phosphoenolpyruvate + UDP-N-acetyl-alpha-D-glucosamine = UDP-N-acetyl-3-O-(1-carboxyvinyl)-alpha-D-glucosamine + phosphate. Its pathway is cell wall biogenesis; peptidoglycan biosynthesis. Cell wall formation. Adds enolpyruvyl to UDP-N-acetylglucosamine. The polypeptide is UDP-N-acetylglucosamine 1-carboxyvinyltransferase (Buchnera aphidicola subsp. Schizaphis graminum (strain Sg)).